The sequence spans 125 residues: Small ribosomal subunit protein uS12 (125 aa).

Asp89 is subject to 3-methylthioaspartic acid. A disordered region spans residues 104–125 (LQGVKDRKQSRSKYGSKRPKKA). Positions 113-125 (SRSKYGSKRPKKA) are enriched in basic residues.

This sequence belongs to the universal ribosomal protein uS12 family. In terms of assembly, part of the 30S ribosomal subunit. Contacts proteins S8 and S17. May interact with IF1 in the 30S initiation complex.

Its function is as follows. With S4 and S5 plays an important role in translational accuracy. Interacts with and stabilizes bases of the 16S rRNA that are involved in tRNA selection in the A site and with the mRNA backbone. Located at the interface of the 30S and 50S subunits, it traverses the body of the 30S subunit contacting proteins on the other side and probably holding the rRNA structure together. The combined cluster of proteins S8, S12 and S17 appears to hold together the shoulder and platform of the 30S subunit. The polypeptide is Small ribosomal subunit protein uS12 (Leptothrix cholodnii (strain ATCC 51168 / LMG 8142 / SP-6) (Leptothrix discophora (strain SP-6))).